Here is a 140-residue protein sequence, read N- to C-terminus: Cysteine proteinase inhibitor 1 (140 aa).

The N-terminal stretch at 1–26 is a signal peptide; it reads MRKYRVAGLVAALLVLHSLATPSAQA. In terms of domain architecture, Cystatin spans 48–135; that stretch reads GGVEPVGNEN…KELQEFKPVD (88 aa). The Secondary area of contact motif lies at 91–95; the sequence is QVVAG.

It belongs to the cystatin family. Phytocystatin subfamily.

Its subcellular location is the secreted. Functionally, there are two distinct cystatins in rice seeds (Oryzacystatin-1 and -2) with different specificities against cysteine proteinases. May be involved in the control of germination by inhibition of endogenous cysteine proteinases. May play a role in defense by inhibiting exogenous proteases such as those present in digestive tracks of insects and nematodes. The protein is Cysteine proteinase inhibitor 1 of Oryza sativa subsp. japonica (Rice).